Reading from the N-terminus, the 65-residue chain is Small, acid-soluble spore protein H 1 (65 aa).

It belongs to the SspH family.

The protein localises to the spore core. The chain is Small, acid-soluble spore protein H 1 from Clostridium botulinum (strain Langeland / NCTC 10281 / Type F).